A 467-amino-acid chain; its full sequence is UDP-N-acetylmuramate--L-alanine ligase (467 aa).

Position 114–120 (114–120 (GTHGKTT)) interacts with ATP.

The protein belongs to the MurCDEF family.

It is found in the cytoplasm. It carries out the reaction UDP-N-acetyl-alpha-D-muramate + L-alanine + ATP = UDP-N-acetyl-alpha-D-muramoyl-L-alanine + ADP + phosphate + H(+). The protein operates within cell wall biogenesis; peptidoglycan biosynthesis. Cell wall formation. This chain is UDP-N-acetylmuramate--L-alanine ligase, found in Rhodopseudomonas palustris (strain TIE-1).